The chain runs to 513 residues: Cytochrome P450 4d10 (513 aa).

Residues Glu-317 and Cys-457 each coordinate heme.

It belongs to the cytochrome P450 family. The cofactor is heme.

Its subcellular location is the endoplasmic reticulum membrane. The protein localises to the microsome membrane. In terms of biological role, may play an important role in the maintenance of specific insect-host plant relationships. May be involved in xenobiotic metabolism. This is Cytochrome P450 4d10 (Cyp4d10) from Drosophila mettleri (Fruit fly).